The following is a 104-amino-acid chain: Replication restart protein PriB (104 aa).

The 101-residue stretch at 1-101 folds into the SSB domain; the sequence is MTNRLVLSGT…LHAEQIDLID (101 aa).

The protein belongs to the PriB family. In terms of assembly, homodimer. Interacts with PriA and DnaT. Component of the replication restart primosome. Primosome assembly occurs via a 'hand-off' mechanism. PriA binds to replication forks, subsequently PriB then DnaT bind; DnaT then displaces ssDNA to generate the helicase loading substrate.

Involved in the restart of stalled replication forks, which reloads the replicative helicase on sites other than the origin of replication; the PriA-PriB pathway is the major replication restart pathway. During primosome assembly it facilitates complex formation between PriA and DnaT on DNA; stabilizes PriA on DNA. Stimulates the DNA unwinding activity of PriA helicase. In Enterobacter sp. (strain 638), this protein is Replication restart protein PriB.